The sequence spans 302 residues: Elongation factor Ts (302 aa).

Positions 80–83 (TDFV) are involved in Mg(2+) ion dislocation from EF-Tu.

Belongs to the EF-Ts family.

The protein resides in the cytoplasm. In terms of biological role, associates with the EF-Tu.GDP complex and induces the exchange of GDP to GTP. It remains bound to the aminoacyl-tRNA.EF-Tu.GTP complex up to the GTP hydrolysis stage on the ribosome. This is Elongation factor Ts from Gluconobacter oxydans (strain 621H) (Gluconobacter suboxydans).